Here is a 370-residue protein sequence, read N- to C-terminus: Prolactin-releasing peptide receptor (370 aa).

Residues 1-62 lie on the Extracellular side of the membrane; sequence MASSTTRGPR…LQLVHQLKGL (62 aa). N-linked (GlcNAc...) asparagine glycosylation is found at Asn27 and Asn36. The helical transmembrane segment at 63 to 83 threads the bilayer; it reads IVLLYSVVVVVGLVGNCLLVL. At 84 to 101 the chain is on the cytoplasmic side; sequence VIARVRRLHNVTNFLIGN. The helical transmembrane segment at 102-122 threads the bilayer; that stretch reads LALSDVLMCTACVPLTLAYAF. Residues 123–126 lie on the Extracellular side of the membrane; that stretch reads EPRG. Residues 127–147 form a helical membrane-spanning segment; sequence WVFGGGLCHLVFFLQPVTVYV. Cys134 and Cys211 are disulfide-bonded. At 148-175 the chain is on the cytoplasmic side; that stretch reads SVFTLTTIAVDRYVVLVHPLRRRISLRL. Residues 176–196 form a helical membrane-spanning segment; the sequence is SAYAVLAIWALSAVLALPAAV. The Extracellular portion of the chain corresponds to 197-225; it reads HTYHVELKPHDVRLCEEFWGSQERQRQLY. Residues 226-246 form a helical membrane-spanning segment; the sequence is AWGLLLVTYLLPLLVILLSYV. Topologically, residues 247-276 are cytoplasmic; it reads RVSVKLRNRVVPGCVTQSQADWDRARRRRT. Residues 277-297 traverse the membrane as a helical segment; sequence FCLLVVIVVVFAVCWLPLHVF. Topologically, residues 298–317 are extracellular; sequence NLLRDLDPHAIDPYAFGLVQ. Residues 318-338 traverse the membrane as a helical segment; that stretch reads LLCHWLAMSSACYNPFIYAWL. Topologically, residues 339 to 369 are cytoplasmic; the sequence is HDSFREELRKLLVAWPRKIAPHGQNMTVSVV. The required for interaction with GRIP1, GRIP2 and PICK1 stretch occupies residues 365-370; the sequence is TVSVVI.

The protein belongs to the G-protein coupled receptor 1 family. In terms of assembly, interacts through its C-terminal region with the PDZ domain-containing proteins GRIP1, GRIP2 and PICK1. Interacts with PDZ domains 4 and 5 of GRIP1 and with the PDZ domain of PICK1. As to expression, only detected in the pituitary gland and in all cell types of pituitary adenomas.

The protein resides in the cell membrane. Its function is as follows. Receptor for prolactin-releasing peptide (PrRP). Implicated in lactation, regulation of food intake and pain-signal processing. The sequence is that of Prolactin-releasing peptide receptor (PRLHR) from Homo sapiens (Human).